The chain runs to 436 residues: Adenosylmethionine-8-amino-7-oxononanoate aminotransferase (436 aa).

Trp66 serves as a coordination point for substrate. 126 to 127 is a binding site for pyridoxal 5'-phosphate; the sequence is GS. A substrate-binding site is contributed by Tyr159. Residue Asp256 participates in pyridoxal 5'-phosphate binding. Substrate-binding residues include Lys285 and Gly318. Lys285 bears the N6-(pyridoxal phosphate)lysine mark. 319-320 contacts pyridoxal 5'-phosphate; sequence PT. Arg402 lines the substrate pocket.

The protein belongs to the class-III pyridoxal-phosphate-dependent aminotransferase family. BioA subfamily. Homodimer. Pyridoxal 5'-phosphate serves as cofactor.

It is found in the cytoplasm. The catalysed reaction is (8S)-8-amino-7-oxononanoate + S-adenosyl-L-methionine = S-adenosyl-4-methylsulfanyl-2-oxobutanoate + (7R,8S)-7,8-diammoniononanoate. It functions in the pathway cofactor biosynthesis; biotin biosynthesis; 7,8-diaminononanoate from 8-amino-7-oxononanoate (SAM route): step 1/1. Its function is as follows. Catalyzes the transfer of the alpha-amino group from S-adenosyl-L-methionine (SAM) to 7-keto-8-aminopelargonic acid (KAPA) to form 7,8-diaminopelargonic acid (DAPA). It is the only aminotransferase known to utilize SAM as an amino donor. This Mycobacterium leprae (strain TN) protein is Adenosylmethionine-8-amino-7-oxononanoate aminotransferase.